The primary structure comprises 363 residues: Aminomethyltransferase (363 aa).

The protein belongs to the GcvT family. As to quaternary structure, the glycine cleavage system is composed of four proteins: P, T, L and H.

The enzyme catalyses N(6)-[(R)-S(8)-aminomethyldihydrolipoyl]-L-lysyl-[protein] + (6S)-5,6,7,8-tetrahydrofolate = N(6)-[(R)-dihydrolipoyl]-L-lysyl-[protein] + (6R)-5,10-methylene-5,6,7,8-tetrahydrofolate + NH4(+). Functionally, the glycine cleavage system catalyzes the degradation of glycine. In Nitrosomonas eutropha (strain DSM 101675 / C91 / Nm57), this protein is Aminomethyltransferase.